We begin with the raw amino-acid sequence, 325 residues long: Dimethylallyltranstransferase (325 aa).

Isopentenyl diphosphate contacts are provided by Arg-54 and His-84. Mg(2+)-binding residues include Asp-91 and Asp-95. The DDXXD motif motif lies at 91 to 95 (DRVVD). Arg-101 is a binding site for isopentenyl diphosphate. The short motif at 217–221 (RDIIA) is the DDXXD motif element.

Belongs to the FPP/GGPP synthase family. It depends on Mg(2+) as a cofactor.

It carries out the reaction isopentenyl diphosphate + dimethylallyl diphosphate = (2E)-geranyl diphosphate + diphosphate. It functions in the pathway isoprenoid biosynthesis; geranyl diphosphate biosynthesis; geranyl diphosphate from dimethylallyl diphosphate and isopentenyl diphosphate: step 1/1. Functionally, catalyzes the addition of isopentenyl diphosphate (IPP) onto dimethylallyl diphosphate (DMAPP) to form geranyl pyrophosphate (GPP). Is probably involved in the biosynthesis of decaprenyl diphosphate, which is required for mycobacterial cell wall synthesis. Could be required for host endothelial-cell invasion and/or intracellular survival. The sequence is that of Dimethylallyltranstransferase from Mycobacterium tuberculosis (strain ATCC 25618 / H37Rv).